The following is a 223-amino-acid chain: Adenylate kinase 4, mitochondrial (223 aa).

Residue glycine 15 to threonine 20 participates in a ribonucleoside 5'-triphosphate binding. Residues serine 35 to valine 64 are NMP. Serine 36 and arginine 41 together coordinate AMP. An N6-succinyllysine modification is found at lysine 60. AMP-binding positions include leucine 62–valine 64, glycine 89–arginine 92, and glutamine 96. The tract at residues arginine 125 to aspartate 162 is LID. Residues arginine 126 and valine 135–tyrosine 136 contribute to the a ribonucleoside 5'-triphosphate site. Arginine 170 contributes to the AMP binding site. Lysine 175 carries the post-translational modification N6-acetyllysine. Lysine 179 and lysine 186 each carry N6-acetyllysine; alternate. An N6-succinyllysine; alternate mark is found at lysine 179 and lysine 186. A ribonucleoside 5'-triphosphate is bound at residue threonine 199.

The protein belongs to the adenylate kinase family. AK3 subfamily. In terms of assembly, monomer. Interacts with SLC25A5/ANT2. As to expression, expressed in the pyramidal cells in the hippocampus.

Its subcellular location is the mitochondrion matrix. It carries out the reaction a ribonucleoside 5'-phosphate + ATP = a ribonucleoside 5'-diphosphate + ADP. The enzyme catalyses AMP + ATP = 2 ADP. The catalysed reaction is GTP + AMP = GDP + ADP. It catalyses the reaction CMP + ATP = CDP + ADP. It carries out the reaction GTP + CMP = CDP + GDP. The enzyme catalyses dAMP + ATP = dADP + ADP. The catalysed reaction is dCMP + ATP = dCDP + ADP. It catalyses the reaction a 2'-deoxyribonucleoside 5'-diphosphate + ATP = a 2'-deoxyribonucleoside 5'-triphosphate + ADP. It carries out the reaction a ribonucleoside 5'-diphosphate + ATP = a ribonucleoside 5'-triphosphate + ADP. The enzyme catalyses GDP + ATP = GTP + ADP. The catalysed reaction is CDP + GTP = CTP + GDP. It catalyses the reaction CDP + ATP = CTP + ADP. It carries out the reaction UDP + ATP = UTP + ADP. The enzyme catalyses GTP + UDP = UTP + GDP. The catalysed reaction is dADP + GTP = dATP + GDP. It catalyses the reaction dCDP + GTP = dCTP + GDP. It carries out the reaction dCDP + ATP = dCTP + ADP. The enzyme catalyses dGDP + ATP = dGTP + ADP. The catalysed reaction is dTDP + GTP = dTTP + GDP. It catalyses the reaction dTDP + ATP = dTTP + ADP. Its function is as follows. Broad-specificity mitochondrial nucleoside phosphate kinase involved in cellular nucleotide homeostasis by catalyzing nucleoside-phosphate interconversions. Similar to other adenylate kinases, preferentially catalyzes the phosphorylation of the nucleoside monophosphate AMP with ATP as phosphate donor to produce ADP. Phosphorylates only AMP when using GTP as phosphate donor. In vitro, can also catalyze the phosphorylation of CMP, dAMP and dCMP and use GTP as an alternate phosphate donor. Moreover, exhibits a diphosphate kinase activity, producing ATP, CTP, GTP, UTP, TTP, dATP, dCTP and dGTP from the corresponding diphosphate substrates with either ATP or GTP as phosphate donors. Plays a role in controlling cellular ATP levels by regulating phosphorylation and activation of the energy sensor protein kinase AMPK. Plays a protective role in the cellular response to oxidative stress. The protein is Adenylate kinase 4, mitochondrial of Rattus norvegicus (Rat).